A 1485-amino-acid polypeptide reads, in one-letter code: Putative E3 ubiquitin-protein ligase LIN-2 (1485 aa).

The span at Glu337–Asp353 shows a compositional bias: acidic residues. 3 disordered regions span residues Glu337–Pro363, Asn384–Ala450, and Arg462–Met507. A compositionally biased stretch (low complexity) spans Ser438–Ala450. Residues Ser466–Ser484 are compositionally biased toward polar residues. The U-box domain occupies Lys510–Leu585. WD repeat units follow at residues Ser1194–Asp1232, Glu1246–Ile1283, Ser1409–Ser1448, and Gly1454–Asp1485.

It carries out the reaction S-ubiquitinyl-[E2 ubiquitin-conjugating enzyme]-L-cysteine + [acceptor protein]-L-lysine = [E2 ubiquitin-conjugating enzyme]-L-cysteine + N(6)-ubiquitinyl-[acceptor protein]-L-lysine.. Its pathway is protein modification; protein ubiquitination. Its function is as follows. Putative E3 ubiquitin-protein ligase involved in the rhizobial infection process. Plays an important role in the early steps of infection thread formation and in growth and differentiation of nodules. The sequence is that of Putative E3 ubiquitin-protein ligase LIN-2 from Lotus japonicus (Lotus corniculatus var. japonicus).